A 336-amino-acid polypeptide reads, in one-letter code: Pyridoxal 5'-phosphate synthase subunit PdxS (336 aa).

Residue D62 participates in D-ribose 5-phosphate binding. The active-site Schiff-base intermediate with D-ribose 5-phosphate is K119. G191 lines the D-ribose 5-phosphate pocket. A D-glyceraldehyde 3-phosphate-binding site is contributed by K203. Residues G254 and 275–276 each bind D-ribose 5-phosphate; that span reads GS.

It belongs to the PdxS/SNZ family. In terms of assembly, in the presence of PdxT, forms a dodecamer of heterodimers.

It carries out the reaction aldehydo-D-ribose 5-phosphate + D-glyceraldehyde 3-phosphate + L-glutamine = pyridoxal 5'-phosphate + L-glutamate + phosphate + 3 H2O + H(+). Its pathway is cofactor biosynthesis; pyridoxal 5'-phosphate biosynthesis. In terms of biological role, catalyzes the formation of pyridoxal 5'-phosphate from ribose 5-phosphate (RBP), glyceraldehyde 3-phosphate (G3P) and ammonia. The ammonia is provided by the PdxT subunit. Can also use ribulose 5-phosphate and dihydroxyacetone phosphate as substrates, resulting from enzyme-catalyzed isomerization of RBP and G3P, respectively. The polypeptide is Pyridoxal 5'-phosphate synthase subunit PdxS (Pyrobaculum calidifontis (strain DSM 21063 / JCM 11548 / VA1)).